Consider the following 276-residue polypeptide: NH(3)-dependent NAD(+) synthetase (276 aa).

43-50 serves as a coordination point for ATP; the sequence is GISGGVDS. D49 is a Mg(2+) binding site. A deamido-NAD(+)-binding site is contributed by R146. T166 provides a ligand contact to ATP. E171 is a binding site for Mg(2+). Residues K179 and D186 each contribute to the deamido-NAD(+) site. ATP-binding residues include K195 and T217. 266–267 contributes to the deamido-NAD(+) binding site; the sequence is HK.

It belongs to the NAD synthetase family. In terms of assembly, homodimer.

The catalysed reaction is deamido-NAD(+) + NH4(+) + ATP = AMP + diphosphate + NAD(+) + H(+). It functions in the pathway cofactor biosynthesis; NAD(+) biosynthesis; NAD(+) from deamido-NAD(+) (ammonia route): step 1/1. Catalyzes the ATP-dependent amidation of deamido-NAD to form NAD. Uses ammonia as a nitrogen source. This is NH(3)-dependent NAD(+) synthetase from Shewanella amazonensis (strain ATCC BAA-1098 / SB2B).